The primary structure comprises 211 residues: Dual specificity protein phosphatase 26 (211 aa).

The Tyrosine-protein phosphatase domain maps to 60–207; that stretch reads NHADEVWPGL…LLALDRRLRQ (148 aa). The active-site Phosphocysteine intermediate is cysteine 152.

The protein belongs to the protein-tyrosine phosphatase family. Non-receptor class dual specificity subfamily. Interacts with HSF4.

It localises to the cytoplasm. It is found in the nucleus. The protein resides in the golgi apparatus. It catalyses the reaction O-phospho-L-tyrosyl-[protein] + H2O = L-tyrosyl-[protein] + phosphate. The catalysed reaction is O-phospho-L-seryl-[protein] + H2O = L-seryl-[protein] + phosphate. It carries out the reaction O-phospho-L-threonyl-[protein] + H2O = L-threonyl-[protein] + phosphate. In terms of biological role, inactivates MAPK1 and MAPK3 which leads to dephosphorylation of heat shock factor protein 4 and a reduction in its DNA-binding activity. This is Dual specificity protein phosphatase 26 (Dusp26) from Rattus norvegicus (Rat).